Here is a 332-residue protein sequence, read N- to C-terminus: 5-dehydro-2-deoxygluconokinase 1 (332 aa).

This sequence belongs to the carbohydrate kinase PfkB family.

It carries out the reaction 5-dehydro-2-deoxy-D-gluconate + ATP = 6-phospho-5-dehydro-2-deoxy-D-gluconate + ADP + H(+). It functions in the pathway polyol metabolism; myo-inositol degradation into acetyl-CoA; acetyl-CoA from myo-inositol: step 5/7. In terms of biological role, catalyzes the phosphorylation of 5-dehydro-2-deoxy-D-gluconate (2-deoxy-5-keto-D-gluconate or DKG) to 6-phospho-5-dehydro-2-deoxy-D-gluconate (DKGP). This Bacillus cereus (strain ZK / E33L) protein is 5-dehydro-2-deoxygluconokinase 1.